A 256-amino-acid chain; its full sequence is Glutamate racemase (256 aa).

Substrate is bound by residues 11–12 (DS) and 43–44 (YG). Cysteine 74 (proton donor/acceptor) is an active-site residue. 75–76 (NT) serves as a coordination point for substrate. Cysteine 182 (proton donor/acceptor) is an active-site residue. 183 to 184 (TH) contacts substrate.

The protein belongs to the aspartate/glutamate racemases family.

It catalyses the reaction L-glutamate = D-glutamate. The protein operates within cell wall biogenesis; peptidoglycan biosynthesis. Functionally, provides the (R)-glutamate required for cell wall biosynthesis. The protein is Glutamate racemase of Leptospira interrogans serogroup Icterohaemorrhagiae serovar copenhageni (strain Fiocruz L1-130).